The primary structure comprises 180 residues: UPF0340 protein RBAM_034070 (180 aa).

It belongs to the UPF0340 family.

The sequence is that of UPF0340 protein RBAM_034070 from Bacillus velezensis (strain DSM 23117 / BGSC 10A6 / LMG 26770 / FZB42) (Bacillus amyloliquefaciens subsp. plantarum).